Reading from the N-terminus, the 116-residue chain is Large ribosomal subunit protein bL17 (116 aa).

It belongs to the bacterial ribosomal protein bL17 family. In terms of assembly, part of the 50S ribosomal subunit. Contacts protein L32.

The sequence is that of Large ribosomal subunit protein bL17 from Helicobacter hepaticus (strain ATCC 51449 / 3B1).